Here is a 204-residue protein sequence, read N- to C-terminus: High frequency lysogenization protein HflD homolog (204 aa).

The protein belongs to the HflD family.

The protein localises to the cytoplasm. It localises to the cell inner membrane. This is High frequency lysogenization protein HflD homolog from Shewanella woodyi (strain ATCC 51908 / MS32).